The following is a 356-amino-acid chain: Torsin-like protein (356 aa).

The N-terminal stretch at methionine 1–threonine 18 is a signal peptide. Glycine 110–asparagine 117 contributes to the ATP binding site. N-linked (GlcNAc...) asparagine glycosylation is found at asparagine 125 and asparagine 250.

Belongs to the ClpA/ClpB family. Torsin subfamily.

It is found in the endoplasmic reticulum lumen. May serve as a molecular chaperone assisting in the proper folding of secreted and/or membrane proteins. The chain is Torsin-like protein (ooc-5) from Caenorhabditis elegans.